The primary structure comprises 310 residues: Ribosomal RNA small subunit methyltransferase H (310 aa).

Residues 33 to 35 (GGH), aspartate 52, phenylalanine 79, aspartate 98, and glutamine 105 contribute to the S-adenosyl-L-methionine site.

Belongs to the methyltransferase superfamily. RsmH family.

The protein resides in the cytoplasm. The enzyme catalyses cytidine(1402) in 16S rRNA + S-adenosyl-L-methionine = N(4)-methylcytidine(1402) in 16S rRNA + S-adenosyl-L-homocysteine + H(+). Its function is as follows. Specifically methylates the N4 position of cytidine in position 1402 (C1402) of 16S rRNA. This chain is Ribosomal RNA small subunit methyltransferase H, found in Campylobacter jejuni subsp. jejuni serotype O:23/36 (strain 81-176).